The sequence spans 241 residues: Uridylate kinase (241 aa).

ATP is bound by residues 10–13, glycine 53, and arginine 57; that span reads KLSG. UMP is bound by residues aspartate 72 and 133–140; that span reads AGSPYFST. Residues asparagine 161, tyrosine 167, and aspartate 170 each coordinate ATP.

This sequence belongs to the UMP kinase family. In terms of assembly, homohexamer.

It localises to the cytoplasm. It carries out the reaction UMP + ATP = UDP + ADP. It functions in the pathway pyrimidine metabolism; CTP biosynthesis via de novo pathway; UDP from UMP (UMPK route): step 1/1. Inhibited by UTP. Catalyzes the reversible phosphorylation of UMP to UDP. This chain is Uridylate kinase, found in Onion yellows phytoplasma (strain OY-M).